Consider the following 326-residue polypeptide: Phenylalanine--tRNA ligase alpha subunit (326 aa).

Glu251 is a binding site for Mg(2+).

Belongs to the class-II aminoacyl-tRNA synthetase family. Phe-tRNA synthetase alpha subunit type 1 subfamily. In terms of assembly, tetramer of two alpha and two beta subunits. Mg(2+) is required as a cofactor.

The protein localises to the cytoplasm. It carries out the reaction tRNA(Phe) + L-phenylalanine + ATP = L-phenylalanyl-tRNA(Phe) + AMP + diphosphate + H(+). This Alteromonas mediterranea (strain DSM 17117 / CIP 110805 / LMG 28347 / Deep ecotype) protein is Phenylalanine--tRNA ligase alpha subunit.